The primary structure comprises 538 residues: Chaperonin GroEL (538 aa).

Residues 29-32 (TLGP), 86-90 (DGTTT), glycine 413, 479-481 (DAL), and aspartate 495 each bind ATP.

This sequence belongs to the chaperonin (HSP60) family. As to quaternary structure, forms a cylinder of 14 subunits composed of two heptameric rings stacked back-to-back. Interacts with the co-chaperonin GroES.

It localises to the cytoplasm. It catalyses the reaction ATP + H2O + a folded polypeptide = ADP + phosphate + an unfolded polypeptide.. In terms of biological role, together with its co-chaperonin GroES, plays an essential role in assisting protein folding. The GroEL-GroES system forms a nano-cage that allows encapsulation of the non-native substrate proteins and provides a physical environment optimized to promote and accelerate protein folding. The chain is Chaperonin GroEL from Fervidobacterium nodosum (strain ATCC 35602 / DSM 5306 / Rt17-B1).